The chain runs to 675 residues: E3 ubiquitin-protein ligase COP1 (675 aa).

The segment at M1–E40 is disordered. Zn(2+) is bound by residues C52, C55, C67, H69, C72, C75, C86, and C89. An RING-type zinc finger spans residues C52–S90. The interval C67–Q177 is CLS (cytoplasmic localization signal). Residues A120 to Q177 are SNLS (subnuclear localization signal). The stretch at C134–R201 forms a coiled coil. The segment at E261–V290 is disordered. Over residues G279 to V290 the composition is skewed to polar residues. The short motif at R294 to A317 is the Bipartite nuclear localization signal element. WD repeat units follow at residues H369–A408, S418–E458, E461–N501, D503–H543, G547–T585, G588–S627, and A642–A675. The binding of human TRIB1 COP1-binding-motif stretch occupies residues K593–F595.

As to quaternary structure, homodimer. Interacts with HY5, HYH, BBX24/STO, BBX25/STH, CIP8, COP10, SPA1, SPA2, SPA3, SPA4 and UVR8 and phosphorylated PHYA. Light induces dissociation of the SPA1/COP1 complex. Interacts with HRT/RPP8 and triggers it to the 26s proteasome. Binds to CRY2; this competitive interaction prevents triggering to proteasome of other binding proteins. Binds to SHW1 in the nucleus. Bonds to CIP7. Interacts with CSU2. Binds to CIP1. Interacts directly with DHU1. Associates to UNE10/PIF8. Binds directly to PCH1 and PCHL. Autoubiquitinated.

Its subcellular location is the nucleus. The protein localises to the cytoplasm. The catalysed reaction is S-ubiquitinyl-[E2 ubiquitin-conjugating enzyme]-L-cysteine + [acceptor protein]-L-lysine = [E2 ubiquitin-conjugating enzyme]-L-cysteine + N(6)-ubiquitinyl-[acceptor protein]-L-lysine.. It participates in protein modification; protein ubiquitination. In terms of biological role, E3 ubiquitin-protein ligase that acts as a repressor of photomorphogenesis and as an activator of etiolation in darkness. E3 ubiquitin ligases accept ubiquitin from an E2 ubiquitin-conjugating enzyme in the form of a thioester and then directly transfers the ubiquitin to targeted substrates. Represses photomorphogenesis in darkness by mediating ubiquitination and subsequent proteasomal degradation of light-induced transcription factors such as HY5, HYH and LAF1. Down-regulates MYB21, probably via ubiquitination process. Light stimuli abrogate the repression of photomorphogenesis, possibly due to its localization to the cytoplasm. Could play a role in switching between skotomorphogenetic and photomorphogenetic pathways. Mediates the ubiquitination-dependent degradation of HY5 in the darkness during seedling development (e.g. hypocotyl growth). Represses CIP7 in darkness. Triggers ubiquitination and subsequent protein degradation of UNE10/PIF8, PCH1 and PCHL in the dark. This chain is E3 ubiquitin-protein ligase COP1, found in Arabidopsis thaliana (Mouse-ear cress).